Here is a 178-residue protein sequence, read N- to C-terminus: Large ribosomal subunit protein uL6 (178 aa).

This sequence belongs to the universal ribosomal protein uL6 family. As to quaternary structure, part of the 50S ribosomal subunit.

Its function is as follows. This protein binds to the 23S rRNA, and is important in its secondary structure. It is located near the subunit interface in the base of the L7/L12 stalk, and near the tRNA binding site of the peptidyltransferase center. In Francisella tularensis subsp. novicida (strain U112), this protein is Large ribosomal subunit protein uL6.